The primary structure comprises 492 residues: NADPH:adrenodoxin oxidoreductase, mitochondrial (492 aa).

A mitochondrion-targeting transit peptide spans 1 to 32 (MAPRCWRWWPWSSWTRTRLPPSRSIQNFGQHF). FAD is bound by residues Ala49, Glu70, Leu78, and Val114. NADP(+)-binding positions include 185–188 (QGNV), 229–230 (RR), and Glu241. A phosphoserine mark is found at Ser311 and Ser318. Residues Trp399 and 406-408 (GVI) contribute to the FAD site. Gly406 contacts NADP(+).

The protein belongs to the ferredoxin--NADP reductase type 1 family. In terms of assembly, monomer. Interacts directly with FDX1. Requires FAD as cofactor. In terms of tissue distribution, detected in adrenal cortex and corpus luteum (at protein level).

The protein resides in the mitochondrion inner membrane. It catalyses the reaction 2 reduced [adrenodoxin] + NADP(+) + H(+) = 2 oxidized [adrenodoxin] + NADPH. The catalysed reaction is 2 reduced [2Fe-2S]-[ferredoxin] + NADP(+) + H(+) = 2 oxidized [2Fe-2S]-[ferredoxin] + NADPH. Its pathway is steroid metabolism; cholesterol metabolism. Serves as the first electron transfer protein in all the mitochondrial P450 systems including cholesterol side chain cleavage in all steroidogenic tissues, steroid 11-beta hydroxylation in the adrenal cortex, 25-OH-vitamin D3-24 hydroxylation in the kidney, and sterol C-27 hydroxylation in the liver. Also acts as a ferredoxin--NADP(+) reductase essential for coenzyme Q biosynthesis: together with FDX2, transfers the electrons required for the hydroxylation reaction performed by COQ6. The protein is NADPH:adrenodoxin oxidoreductase, mitochondrial (FDXR) of Bos taurus (Bovine).